The sequence spans 1363 residues: Spike glycoprotein (1363 aa).

A signal peptide spans 1 to 13 (MFLILLISLPTAF). The Extracellular segment spans residues 14-1307 (AVIGDLKCTT…GTYEYYVKWP (1294 aa)). The BetaCoV S1-NTD domain maps to 15-298 (VIGDLKCTTV…DFMSEIKCKT (284 aa)). 5 cysteine pairs are disulfide-bonded: Cys-21–Cys-165, Cys-160–Cys-193, Cys-172–Cys-252, Cys-286–Cys-296, and Cys-331–Cys-356. Residues Asn-59 and Asn-133 are each glycosylated (N-linked (GlcNAc...) asparagine; by host). A glycan (N-linked (GlcNAc...) asparagine; by host) is linked at Asn-198. The BetaCoV S1-CTD domain occupies 329-617 (PDCNIEAWLN…DVNSGTTCST (289 aa)). Asn-359 is a glycosylation site (N-linked (GlcNAc...) asparagine; by host). 2 cysteine pairs are disulfide-bonded: Cys-374–Cys-427 and Cys-386–Cys-615. N-linked (GlcNAc...) asparagine; by host glycosylation is found at Asn-437, Asn-649, Asn-676, Asn-696, Asn-714, Asn-739, and Asn-788. Fusion peptide regions lie at residues 914–935 (SAIE…VEAY) and 933–953 (EAYN…VQSY). Asn-937 carries N-linked (GlcNAc...) asparagine; by host glycosylation. Cys-938 and Cys-949 are joined by a disulfide. Residues 1014-1064 (QKLIANAFNNALGAIQEGFDATNSALVKIQAVVNANAETLNNLLQQLSNRF) form a heptad repeat 1 region. Positions 1043 to 1087 (QAVVNANAETLNNLLQQLSNRFGAISSSLQEILSRLDALEAQAQI) form a coiled coil. N-linked (GlcNAc...) asparagine; by host glycosylation is found at Asn-1194, Asn-1224, Asn-1234, Asn-1253, Asn-1267, and Asn-1288. The segment at 1258–1296 (APDLSLDYINVTFLDLQDEMNRLQEAIKVLNQSYINLKD) is heptad repeat 2. The stretch at 1269–1297 (TFLDLQDEMNRLQEAIKVLNQSYINLKDI) forms a coiled coil. Residues 1308 to 1328 (WYVWLLIGFAGVAMLVLLFFI) traverse the membrane as a helical segment. The Cytoplasmic portion of the chain corresponds to 1329-1363 (CCCTGCGTSCFKKCGGCCDDYTGHQELVIKTSHED). The KxHxx motif lies at 1359–1363 (TSHED).

It belongs to the betacoronaviruses spike protein family. In terms of assembly, homotrimer; each monomer consists of a S1 and a S2 subunit. The resulting peplomers protrude from the virus surface as spikes. Specific enzymatic cleavages in vivo yield mature proteins. The precursor is processed into S1 and S2 by host cell furin or another cellular protease to yield the mature S1 and S2 proteins. Additionally, a second cleavage leads to the release of a fusion peptide after viral attachment to host cell receptor. Post-translationally, the cytoplasmic Cys-rich domain is palmitoylated. Spike glycoprotein is digested within host endosomes.

It localises to the virion membrane. The protein resides in the host endoplasmic reticulum-Golgi intermediate compartment membrane. Its subcellular location is the host cell membrane. Its function is as follows. Attaches the virion to the cell membrane by interacting with host receptor, initiating the infection. Functionally, mediates fusion of the virion and cellular membranes by acting as a class I viral fusion protein. Under the current model, the protein has at least three conformational states: pre-fusion native state, pre-hairpin intermediate state, and post-fusion hairpin state. During viral and target cell membrane fusion, the coiled coil regions (heptad repeats) assume a trimer-of-hairpins structure, positioning the fusion peptide in close proximity to the C-terminal region of the ectodomain. The formation of this structure appears to drive apposition and subsequent fusion of viral and target cell membranes. In terms of biological role, acts as a viral fusion peptide which is unmasked following S2 cleavage occurring upon virus endocytosis. This Bovine coronavirus (strain 98TXSF-110-LUN) (BCoV-LUN) protein is Spike glycoprotein.